We begin with the raw amino-acid sequence, 547 residues long: bZIP transcription factor 29 (547 aa).

3 disordered regions span residues 1–199 (MGDT…SGGE), 244–312 (NSSE…DIAP), and 333–356 (GDES…TNSV). Over residues 15–52 (LHSSFGTTSSSIPKNPISQLDLNPNFIRSSAPQFSKPF) the composition is skewed to polar residues. Pro residues predominate over residues 63-73 (PSHPNLIPPTS). The segment covering 74-89 (PFSQIPTTRQPGSHNF) has biased composition (polar residues). Residues 120-132 (FRDHDVSMEDRDS) are compositionally biased toward basic and acidic residues. The segment covering 134–157 (VFNSNHSLPPSPFTRCNSTSSSSL) has biased composition (polar residues). Over residues 249–263 (DDSKNGNENRDDMES) the composition is skewed to basic and acidic residues. Residues 264–275 (SRASGTKTNGSD) are compositionally biased toward polar residues. Positions 279-294 (ESSSVNESANNNMNSS) are enriched in low complexity. A compositionally biased stretch (polar residues) spans 344–356 (GSMSRKVSPTNSV). Residues 394–457 (DPKRVKRILA…MGLTNQNNEL (64 aa)) enclose the bZIP domain. Residues 396 to 417 (KRVKRILANRQSAARSKERKMR) form a basic motif region. Residues 416–469 (MRYIVELEHKVQTLQTEATTLSAQLTLLQRDMMGLTNQNNELKFRLQAMEQQAR) adopt a coiled-coil conformation. The segment at 422–457 (LEHKVQTLQTEATTLSAQLTLLQRDMMGLTNQNNEL) is leucine-zipper. The segment covering 517–535 (QLRQQPQQMQQQSHQQNHQ) has biased composition (low complexity). Positions 517 to 547 (QLRQQPQQMQQQSHQQNHQNGTMATKSESNE) are disordered. Over residues 536-547 (NGTMATKSESNE) the composition is skewed to polar residues.

In terms of assembly, forms homodimers. In terms of tissue distribution, expressed in roots, leaves and flowers. Expressed in the root tips, lateral root primordia, and guard cells of leaves, hypocotyls and anthers.

The protein resides in the cytoplasm. Its subcellular location is the nucleus. In terms of biological role, transcription factor that acts as a repressor of reproductive development, meristem size and plant growth. Regulates meristem size, cell size and cell number during plant development. Binds to the promoters of the cell cycle regulators CYCB1-2 and SMR4, and genes involved in cell wall organization, such as XTH9, EXPA1 and EXPA3. Possesses transactivation activity in yeast. Possesses transactivation activity in plant protoplasts. Plays a role in abiotic stress response by binding to the 5'-CAGCTG-3' DNA sequence found in the promoters of MYB44 and TRX8. Plays a role in osmosensory response by binding to the 5'-AGCTGT/G-3' DNA sequence found in the promoters of the hypoosmolarity-responsive genes CYP707A1 and CYP707A3. Binds to the 5'-AGCTGT-3' DNA sequence found in the promoter of the ZAT1 gene in response to abiotic stresses, such as oxidative stress, high-light, osmotic shock, salt and heat stresses. The polypeptide is bZIP transcription factor 29 (Arabidopsis thaliana (Mouse-ear cress)).